Here is a 466-residue protein sequence, read N- to C-terminus: MMNSASVRWQLWIVAFGFFMQTLDTTIVNTALPSMAASLNESPLHMHSVIVSYVLTVAVMLPASGWLADRIGVKNIFFAAILLFTLGSLLCARSETLNELLASRVIQGIGGAMMVPVGRLTVMKIVPRDQYMAAMTFVTLPGQIGPLMGPALGGFLVEYASWHWIFLINLPVGIIGALATWFLMPNYTMRTQRFDISGFLWLAVGMATLTLALDGNRSLGIPPIAIFALITVGLIALLSYWLHARRNERALFNLRLFDTHTFSIGLTGGLLARIGSGMLPFMTPLFLQLGMGFSPFHAGLMMVPMVLGNMGMKRIVVQIVNRLGYRRVLIVSTLLLALVTALFALVALMQWIWMIPIVLFFLGMVNAIRFSTMNTLTLKDLPDTLASGGNSLMSMTMQLSTSLGVSIAGILLGMFSQPHMAAGSGETHMVFIYTYLSMIVIIALPALIFNRVPADTIKQSTLPRKS.

The next 14 helical transmembrane spans lie at 11–31 (LWIV…VNTA), 48–68 (SVIV…GWLA), 71–91 (IGVK…SLLC), 105–125 (VIQG…VMKI), 137–157 (FVTL…GFLV), 164–184 (WIFL…WFLM), 194–214 (FDIS…LALD), 218–238 (SLGI…IALL), 262–282 (FSIG…LPFM), 286–306 (FLQL…VPMV), 328–347 (VLIV…ALVA), 351–370 (WIWM…AIRF), 403–423 (LGVS…MAAG), and 429–449 (MVFI…ALIF).

It belongs to the major facilitator superfamily. TCR/Tet family.

The protein localises to the cell inner membrane. The polypeptide is Putative multidrug resistance protein MdtD (Pectobacterium carotovorum subsp. carotovorum (strain PC1)).